The chain runs to 370 residues: Gap junction delta-4 protein (370 aa).

At 1–19 (MEGVDLLGFLIITLNCNVT) the chain is on the cytoplasmic side. The helical transmembrane segment at 20–40 (MVGKLWFVLTMLLRMLVIVLA) threads the bilayer. At 41 to 76 (GRPVYQDEQERFVCNTLQPGCANVCYDVFSPVSHLR) the chain is on the extracellular side. Residues 77–97 (FWLIQGVCVLLPSAVFSVYVL) form a helical membrane-spanning segment. At 98-146 (HRGATLAALGPRRCPDPREPASGQRRCPRPFGERGGLQVPDFSAGYIIH) the chain is on the cytoplasmic side. A helical transmembrane segment spans residues 147-167 (LLLRTLLEAAFGALHYFLFGF). The Extracellular segment spans residues 168 to 196 (LAPKKFPCTRPPCTGVVDCYVSRPTEKSL). Residues 197-217 (LMLFLWAVSALSFLLGLADLV) form a helical membrane-spanning segment. The Cytoplasmic portion of the chain corresponds to 218-370 (CSLRRRMRRR…HLRARKSEWV (153 aa)). The disordered stretch occupies residues 224–370 (MRRRPGPPTS…HLRARKSEWV (147 aa)). The span at 246-260 (AEGRRTDEEGGREEE) shows a compositional bias: basic and acidic residues. The span at 331 to 346 (PSAAPSRLAAPPSCSS) shows a compositional bias: low complexity.

The protein belongs to the connexin family. Delta-type subfamily. In terms of assembly, a connexon is composed of a hexamer of connexins. As to expression, expressed in pancreas, kidney, skeletal muscle, liver, placenta, and heart.

The protein resides in the cell membrane. It localises to the cell junction. Its subcellular location is the gap junction. One gap junction consists of a cluster of closely packed pairs of transmembrane channels, the connexons, through which materials of low MW diffuse from one cell to a neighboring cell. The polypeptide is Gap junction delta-4 protein (GJD4) (Homo sapiens (Human)).